Consider the following 358-residue polypeptide: Probable G-protein coupled receptor 25 (358 aa).

At Met1–Pro43 the chain is on the extracellular side. The chain crosses the membrane as a helical span at residues Ala44 to Leu64. The Cytoplasmic segment spans residues Ser65–Thr76. A helical membrane pass occupies residues Phe77–Ala97. The Extracellular segment spans residues Ala98–Lys113. The cysteines at positions 112 and 191 are disulfide-linked. Residues Val114–Ser134 traverse the membrane as a helical segment. The Cytoplasmic segment spans residues Val135–Cys155. Residues Val156 to Leu176 traverse the membrane as a helical segment. Residues Tyr177–Gln200 lie on the Extracellular side of the membrane. Residues Gly201–Cys221 form a helical membrane-spanning segment. At Tyr222–Ser239 the chain is on the cytoplasmic side. A helical membrane pass occupies residues Leu240–Leu260. The Extracellular segment spans residues Arg261–Trp284. A helical membrane pass occupies residues Gly285–Leu307. The Cytoplasmic segment spans residues Asp308–Trp358. Residues Asp339–Trp358 form a disordered region.

This sequence belongs to the G-protein coupled receptor 1 family.

The protein localises to the membrane. Orphan receptor. In Mus musculus (Mouse), this protein is Probable G-protein coupled receptor 25 (Gpr25).